The following is a 308-amino-acid chain: Ornithine carbamoyltransferase (308 aa).

Carbamoyl phosphate contacts are provided by residues 52-55 (STRT), Q79, R103, and 130-133 (HPLQ). L-ornithine contacts are provided by residues N162, D224, and 228–229 (SM). Carbamoyl phosphate-binding positions include 264–265 (CL) and R292.

The protein belongs to the aspartate/ornithine carbamoyltransferase superfamily. OTCase family.

The protein resides in the cytoplasm. The enzyme catalyses carbamoyl phosphate + L-ornithine = L-citrulline + phosphate + H(+). Its pathway is amino-acid biosynthesis; L-arginine biosynthesis; L-arginine from L-ornithine and carbamoyl phosphate: step 1/3. Reversibly catalyzes the transfer of the carbamoyl group from carbamoyl phosphate (CP) to the N(epsilon) atom of ornithine (ORN) to produce L-citrulline. The protein is Ornithine carbamoyltransferase of Pyrobaculum calidifontis (strain DSM 21063 / JCM 11548 / VA1).